A 757-amino-acid polypeptide reads, in one-letter code: MDFEANEDLNGVRFSWNVFPSSKTDANKNVVPVGCLYTPLKEIEDLQIASYNPVVCAGPQCKAILNPYCAIDPRSSSWTCPICNSRNHLPPQYANMTQENMPIELQQTTVEYITNKPVQIPPIFFFVVDITAEQENLDALKESIITSLSLLPPNALIGFMTYGNVVQLYDLSCDIIERCSVFRGDREYQFDQLVEMLTGQKPSNTMAPLANGKITPLSLNRFFLPLEQVEFKLNQLLESMSPDQWSVPAGHRPLRATGSALNIATLLLQGCYKNVASRIILFASGPGTVAPGLIVNTELKDPIRSHHDIDSDRAPHYKKACKFYNSIAERVAENGHTVDVFAGCYDQVGMSEMKKMTDSTGGVLLLTDAFSTAIFKQSYLRLFSKDEEGYLTMVFNGNLAVKTSKDLKLQGLIGHASAVKKTDATNVSDSEIGIGSTSVWKMSALSPHHTYGIFFEIANPNAVSPITTDRANLAYTQFITQYQHASGTNRVRVTTVANQMLPFGTPAIAASFDQEAAAVLMARIAVFKAETDDGADVIRWLDRTLIKLCQKYADYNKDDPASFRLAPNFSLYPQFTYYLRRSQFLSVFNNSPDETAFYRHIFTREDTTNSLIMIQPTLTSFSMEEDPQPVLLDSISVKPNTILLLDTFFFILIYHGEQIAQWRKAGYQDDPQYADFKALLEEPKVEAAELLVDRFPLPRFIDTEAGGSQARFLLSKLNPSDNYQDMARGGSTIVLTDDVSLQNFMAHLQQVTVSGQP.

Zn(2+) contacts are provided by Cys56, Cys61, Cys80, and Cys83.

This sequence belongs to the SEC23/SEC24 family. SEC23 subfamily. In terms of assembly, the COPII coat is composed of at least 5 proteins: the SEC23/24 complex, the SEC13/31 complex, and the protein SAR1.

The protein resides in the cytoplasm. It localises to the cytoplasmic vesicle. The protein localises to the COPII-coated vesicle membrane. It is found in the endoplasmic reticulum membrane. Its subcellular location is the golgi apparatus membrane. In terms of biological role, component of the coat protein complex II (COPII) which promotes the formation of transport vesicles from the endoplasmic reticulum (ER). The coat has two main functions, the physical deformation of the endoplasmic reticulum membrane into vesicles and the selection of cargo molecules. This chain is Protein transport protein SEC23-2 (SEC232), found in Candida glabrata (strain ATCC 2001 / BCRC 20586 / JCM 3761 / NBRC 0622 / NRRL Y-65 / CBS 138) (Yeast).